Here is a 58-residue protein sequence, read N- to C-terminus: Large ribosomal subunit protein bL32c (58 aa).

2 disordered regions span residues 1-21 and 34-58; these read MAVPKKRTPKSKTRSRKSQWM and LAGRLAARQDQMQPTQMQPTQMQPN. Positions 44–58 are enriched in low complexity; the sequence is QMQPTQMQPTQMQPN.

The protein belongs to the bacterial ribosomal protein bL32 family.

The protein localises to the plastid. Its subcellular location is the chloroplast. This Cyanidioschyzon merolae (strain NIES-3377 / 10D) (Unicellular red alga) protein is Large ribosomal subunit protein bL32c.